The chain runs to 355 residues: MSLFDTINAGGAQLLGIAWPTVWAIVRILVVAVVILLCVAYLILWERKLIGWMHVRLGPNRVGPAGLLQPIADVLKLLLKEVIQPSAASRWLYLIAPVMTVVPAFAVWAVIPFQAEAVLANVNAGLLYAMAISSIGVYAVILAGWASNSKYAFLGAMRAAAQMVSYEISMGFALVLVLMTAGSLNLSEIVGSQQHGFFAGHGVNFLSWNWLPLLPAFVVYFVSGIAETNRHPFDVVEGESEIVAGHMIDYSGMAFALFFLAEYINMIVISALAATLFLGGWDAPFEFLSFIPGVFWLVLKVFALLSVFIWVRATFPRYRYDQIMRLGWKVFLPVTVIWVVVVGFWMMSPLNIWVK.

8 consecutive transmembrane segments (helical) span residues 25–45 (IVRILVVAVVILLCVAYLILW), 91–111 (WLYLIAPVMTVVPAFAVWAVI), 126–146 (LLYAMAISSIGVYAVILAGWA), 170–190 (MGFALVLVLMTAGSLNLSEIV), 205–225 (FLSWNWLPLLPAFVVYFVSGI), 253–273 (MAFALFFLAEYINMIVISALA), 290–310 (FIPGVFWLVLKVFALLSVFIW), and 330–350 (VFLPVTVIWVVVVGFWMMSPL).

It belongs to the complex I subunit 1 family. In terms of assembly, NDH-1 is composed of 14 different subunits. Subunits NuoA, H, J, K, L, M, N constitute the membrane sector of the complex.

The protein resides in the cell inner membrane. The catalysed reaction is a quinone + NADH + 5 H(+)(in) = a quinol + NAD(+) + 4 H(+)(out). In terms of biological role, NDH-1 shuttles electrons from NADH, via FMN and iron-sulfur (Fe-S) centers, to quinones in the respiratory chain. The immediate electron acceptor for the enzyme in this species is believed to be ubiquinone. Couples the redox reaction to proton translocation (for every two electrons transferred, four hydrogen ions are translocated across the cytoplasmic membrane), and thus conserves the redox energy in a proton gradient. This subunit may bind ubiquinone. The chain is NADH-quinone oxidoreductase subunit H from Burkholderia ambifaria (strain MC40-6).